The sequence spans 270 residues: MSRTIPFLFKLVNRAVILPTAGFTLGVGAFVKAWPDDAGVLSLNDPQTPAELISATKSRQPMELQRVDILAQIEKSEVYNKLAQDEKMHHVLFSEKIPSGHREYHVGQGLLFGKGKLEIDPLVFHDVNHGELTVIYHLGAELGNRDGNVHKGLLSLLLDEALCYCGFPLLPSKRGVTARLSLEFFEDIPVDTTIILKANVKEIKGRKCIIEGHLEQFPLEVSSRNGTRSWNLPHIWGFNHKQEMAKKFAKANCILVEPTWFKYFKWLDMF.

The N-terminal 12 residues, 1–12, are a transit peptide targeting the mitochondrion; that stretch reads MSRTIPFLFKLV.

As to quaternary structure, associates with the mitochondrial ribosome.

The protein localises to the mitochondrion. In terms of biological role, component of MIOREX complexes, large expressome-like assemblies of ribosomes with factors involved in all the steps of post-transcriptional gene expression. The protein is MIOREX complex component 3 of Saccharomyces cerevisiae (strain ATCC 204508 / S288c) (Baker's yeast).